The sequence spans 376 residues: Major capsid protein (376 aa).

It is found in the virion. Its function is as follows. Assembles to form an icosahedral capsid. In Pseudomonas aeruginosa (Bacteriophage KPP25), this protein is Major capsid protein.